The following is a 345-amino-acid chain: N-acetyl-gamma-glutamyl-phosphate reductase (345 aa).

Cys-149 is an active-site residue.

This sequence belongs to the NAGSA dehydrogenase family. Type 1 subfamily.

It is found in the cytoplasm. It carries out the reaction N-acetyl-L-glutamate 5-semialdehyde + phosphate + NADP(+) = N-acetyl-L-glutamyl 5-phosphate + NADPH + H(+). The protein operates within amino-acid biosynthesis; L-arginine biosynthesis; N(2)-acetyl-L-ornithine from L-glutamate: step 3/4. Functionally, catalyzes the NADPH-dependent reduction of N-acetyl-5-glutamyl phosphate to yield N-acetyl-L-glutamate 5-semialdehyde. This chain is N-acetyl-gamma-glutamyl-phosphate reductase, found in Bacillus cereus (strain ATCC 10987 / NRS 248).